The sequence spans 562 residues: uncharacterized protein (562 aa).

The next 5 helical transmembrane spans lie at 10-27 (IYPEIAVFLSLAIGYWVG), 34-53 (FSLGAVTATLLAAVVIGQFD), 63-85 (IFFLMFLFAVGYGIGPQFVQGIA), 92-114 (ALFAVVACLFSLLFPILCAKIAG), and 155-177 (FSVIPVAYAVTYIFGTVGSAIVL). RCK C-terminal domains are found at residues 204–288 (TENA…HPDS) and 290–377 (DETQ…QLGV). A run of 6 helical transmembrane segments spans residues 387-404 (VAFWAFAIVIGALLGSLV), 408-430 (GNLPLTLSTAGGVLIAGLIFSWV), 443-465 (PTVWFMNSVGLNVFIAAIGISAG), 475-497 (LGFSLFLWGVVATTLPLFFAALV), 504-526 (FHPAILLGCCAGARTTTASLGMI), and 539-561 (YTITYAVGNTLLTMWGLVLILIL).

This sequence belongs to the AAE transporter (TC 2.A.81) family.

It localises to the cell membrane. This is an uncharacterized protein from Shewanella oneidensis (strain ATCC 700550 / JCM 31522 / CIP 106686 / LMG 19005 / NCIMB 14063 / MR-1).